A 50-amino-acid chain; its full sequence is U2-ctenitoxin-Pk1a (50 aa).

5 cysteine pairs are disulfide-bonded: Cys1–Cys15, Cys8–Cys21, Cys12–Cys47, Cys14–Cys31, and Cys23–Cys29.

Expressed by the venom gland.

Its subcellular location is the secreted. Functionally, insecticidal neurotoxin that reversibly inhibits the N-methyl-D-aspartate (NMDA)-subtype of ionotropic glutamate receptor (GRIN) and inhibits inactivation of insect sodium channels (Nav). In vivo, is highly toxic to insects. This chain is U2-ctenitoxin-Pk1a, found in Phoneutria keyserlingi (Brazilian wandering spider).